Reading from the N-terminus, the 290-residue chain is Probable septum site-determining protein MinC (290 aa).

This sequence belongs to the MinC family. Interacts with MinD and FtsZ.

Functionally, cell division inhibitor that blocks the formation of polar Z ring septums. Rapidly oscillates between the poles of the cell to destabilize FtsZ filaments that have formed before they mature into polar Z rings. Prevents FtsZ polymerization. In Heliobacterium modesticaldum (strain ATCC 51547 / Ice1), this protein is Probable septum site-determining protein MinC.